A 903-amino-acid chain; its full sequence is Alanine--tRNA ligase (903 aa).

His-581, His-585, Cys-693, and His-697 together coordinate Zn(2+).

This sequence belongs to the class-II aminoacyl-tRNA synthetase family. Requires Zn(2+) as cofactor.

The protein localises to the cytoplasm. The enzyme catalyses tRNA(Ala) + L-alanine + ATP = L-alanyl-tRNA(Ala) + AMP + diphosphate. In terms of biological role, catalyzes the attachment of alanine to tRNA(Ala) in a two-step reaction: alanine is first activated by ATP to form Ala-AMP and then transferred to the acceptor end of tRNA(Ala). Also edits incorrectly charged Ser-tRNA(Ala) and Gly-tRNA(Ala) via its editing domain. This chain is Alanine--tRNA ligase, found in Psychrobacter sp. (strain PRwf-1).